Reading from the N-terminus, the 585-residue chain is L-gulonolactone oxidase 3 (585 aa).

The N-terminal stretch at 1–24 (MRYSHTLQQFSILSFFVTIWTVQS) is a signal peptide. The FAD-binding PCMH-type domain maps to 51 to 233 (KTCHAANVTY…SKVKLSIEKA (183 aa)).

The protein belongs to the oxygen-dependent FAD-linked oxidoreductase family. It depends on FAD as a cofactor.

It localises to the vacuole. It catalyses the reaction L-gulono-1,4-lactone + O2 = L-ascorbate + H2O2 + H(+). It participates in cofactor biosynthesis; L-ascorbate biosynthesis. Functionally, catalyzes the oxidation of L-gulono-1,4-lactone to ascorbic acid. L-gulono-1,4-lactone is oxidized to hydrogen peroxide and L-xylo-hexulonolactone which spontaneously isomerizes to L-ascorbate. The polypeptide is L-gulonolactone oxidase 3 (Arabidopsis thaliana (Mouse-ear cress)).